A 250-amino-acid polypeptide reads, in one-letter code: MSAIEVKNLVKKFHGQTVLHGIDLEVKPGEVVAIIGPSGSGKTTLLRSINLLEQPEAGTITVGDITIDTARSLSQQKSLIRQLRQHVGFVFQNFNLFPHRTVLENIIEGPVIVKGEPKEEATARARELLAKVGLAGKETSYPRRLSGGQQQRVAIARALAMRPEVILFDEPTSALDPELVGEVLNTIRQLAQEKRTMVIVTHEMSFARDVADRAIFMDQGRIVEQGAAKALFADPEQPRTRQFLEKFLLQ.

Residues 4–244 (IEVKNLVKKF…PEQPRTRQFL (241 aa)) enclose the ABC transporter domain. Residue 36–43 (GPSGSGKT) participates in ATP binding.

Belongs to the ABC transporter superfamily. In terms of assembly, the complex is composed of two ATP-binding proteins (TcyN), two transmembrane proteins (TcyL) and a solute-binding protein (TcyJ).

It localises to the cell inner membrane. The enzyme catalyses L-cystine(out) + ATP + H2O = L-cystine(in) + ADP + phosphate + H(+). The catalysed reaction is D-cystine(out) + ATP + H2O = D-cystine(in) + ADP + phosphate + H(+). With respect to regulation, the TcyJLN system is inhibited by L-cystine, L-cysteine, DL-2,6-diaminopimelic acid and L-cystathionine, and is stimulated by D-cysteine. In terms of biological role, part of the ABC transporter complex TcyJLN involved in L-cystine import. This high affinity cystine transporter is involved in resistance to oxidative stress by forming a L-cysteine/L-cystine shuttle system with the EamA transporter, which exports L-cysteine as reducing equivalents to the periplasm to prevent the cells from oxidative stress. Exported L-cysteine can reduce the periplasmic hydrogen peroxide to water, and then generated L-cystine is imported back into the cytoplasm via the TcyJLN complex. Functions at low cystine concentrations. The system can also transport L-cysteine, diaminopimelic acid (DAP), djenkolate, lanthionine, D-cystine, homocystine, and it mediates accumulation of the toxic compounds L-selenaproline (SCA) and L-selenocystine (SeCys). Could also facilitate threonine efflux. Responsible for energy coupling to the transport system. This chain is L-cystine transport system ATP-binding protein TcyN, found in Escherichia coli (strain K12).